The chain runs to 357 residues: UDP-N-acetylglucosamine--N-acetylmuramyl-(pentapeptide) pyrophosphoryl-undecaprenol N-acetylglucosamine transferase (357 aa).

UDP-N-acetyl-alpha-D-glucosamine-binding positions include 14–16, N128, R169, S193, I248, and Q292; that span reads TGG.

The protein belongs to the glycosyltransferase 28 family. MurG subfamily.

It is found in the cell inner membrane. It carries out the reaction di-trans,octa-cis-undecaprenyl diphospho-N-acetyl-alpha-D-muramoyl-L-alanyl-D-glutamyl-meso-2,6-diaminopimeloyl-D-alanyl-D-alanine + UDP-N-acetyl-alpha-D-glucosamine = di-trans,octa-cis-undecaprenyl diphospho-[N-acetyl-alpha-D-glucosaminyl-(1-&gt;4)]-N-acetyl-alpha-D-muramoyl-L-alanyl-D-glutamyl-meso-2,6-diaminopimeloyl-D-alanyl-D-alanine + UDP + H(+). Its pathway is cell wall biogenesis; peptidoglycan biosynthesis. In terms of biological role, cell wall formation. Catalyzes the transfer of a GlcNAc subunit on undecaprenyl-pyrophosphoryl-MurNAc-pentapeptide (lipid intermediate I) to form undecaprenyl-pyrophosphoryl-MurNAc-(pentapeptide)GlcNAc (lipid intermediate II). The protein is UDP-N-acetylglucosamine--N-acetylmuramyl-(pentapeptide) pyrophosphoryl-undecaprenol N-acetylglucosamine transferase of Bdellovibrio bacteriovorus (strain ATCC 15356 / DSM 50701 / NCIMB 9529 / HD100).